A 317-amino-acid chain; its full sequence is Pantothenate kinase (317 aa).

101-108 lines the ATP pocket; that stretch reads GSVAVGKS.

It belongs to the prokaryotic pantothenate kinase family.

The protein resides in the cytoplasm. It catalyses the reaction (R)-pantothenate + ATP = (R)-4'-phosphopantothenate + ADP + H(+). Its pathway is cofactor biosynthesis; coenzyme A biosynthesis; CoA from (R)-pantothenate: step 1/5. This is Pantothenate kinase from Actinobacillus succinogenes (strain ATCC 55618 / DSM 22257 / CCUG 43843 / 130Z).